Consider the following 392-residue polypeptide: Streptogrisin-D (392 aa).

The signal sequence occupies residues 1–64 (MCVSRRRNSG…AGFTFQTANA (64 aa)). A propeptide spanning residues 65–204 (SDDVPAFGAK…NRTAGEFTPL (140 aa)) is cleaved from the precursor. Cysteines 218 and 238 form a disulfide. Active-site charge relay system residues include His237, Asp266, and Ser348. Cys342 and Cys369 are joined by a disulfide.

It belongs to the peptidase S1 family. Homodimer.

Functionally, has a primary specificity for large aliphatic or aromatic amino acids. The chain is Streptogrisin-D (sprD) from Streptomyces griseus.